Reading from the N-terminus, the 531-residue chain is 2,3-bisphosphoglycerate-independent phosphoglycerate mutase (531 aa).

Positions 13 and 63 each coordinate Mn(2+). Catalysis depends on serine 63, which acts as the Phosphoserine intermediate. Substrate is bound by residues histidine 124, 154–155, arginine 187, arginine 193, 261–264, and lysine 342; these read RD and RPDR. Residues aspartate 420, histidine 424, aspartate 462, histidine 463, and histidine 480 each contribute to the Mn(2+) site.

Belongs to the BPG-independent phosphoglycerate mutase family. In terms of assembly, monomer. Mn(2+) serves as cofactor.

It carries out the reaction (2R)-2-phosphoglycerate = (2R)-3-phosphoglycerate. Its pathway is carbohydrate degradation; glycolysis; pyruvate from D-glyceraldehyde 3-phosphate: step 3/5. In terms of biological role, catalyzes the interconversion of 2-phosphoglycerate and 3-phosphoglycerate. The polypeptide is 2,3-bisphosphoglycerate-independent phosphoglycerate mutase (Mycoplasma mycoides subsp. mycoides SC (strain CCUG 32753 / NCTC 10114 / PG1)).